A 481-amino-acid chain; its full sequence is Palmitoyltransferase PFA4 (481 aa).

The interval 1–22 (MTNQDPDDGAYPSSQSDDDGIE) is disordered. Residues 1-66 (MTNQDPDDGA…APLTGRRRTP (66 aa)) are Cytoplasmic-facing. Residues 67–87 (LSWTEVIWVSLTLLLIAVLGY) form a helical membrane-spanning segment. The Lumenal segment spans residues 88-108 (SSQLYVMLPYYEKTPSFSPQA). The chain crosses the membrane as a helical span at residues 109–129 (LAAVLVPFNLGLLAIYYNYWL). At 130–223 (CVTTDAGSVP…LANCVGHFNH (94 aa)) the chain is on the cytoplasmic side. The region spanning 181–231 (RYCKTCSAFKPPRSHHCKTCQRCVLRMDHHCPWLANCVGHFNHAHFIRFLF) is the DHHC domain. Cys211 serves as the catalytic S-palmitoyl cysteine intermediate. The helical transmembrane segment at 224–244 (AHFIRFLFYVDVTCLYHLIMI) threads the bilayer. Residues 245 to 265 (SCRVLDSFNSYTYWREPCARE) lie on the Lumenal side of the membrane. Residues 266–286 (LVWLVVNYALCIPVILLVGIF) traverse the membrane as a helical segment. At 287–481 (SLYHFYCLAV…EVRPHTPWSV (195 aa)) the chain is on the cytoplasmic side. Residues 370–481 (SQYRWPPKDP…EVRPHTPWSV (112 aa)) form a disordered region. Low complexity predominate over residues 418-431 (SSPSSSDSHSSLHL). Composition is skewed to basic and acidic residues over residues 441-452 (LPHHFDPPHDPD) and 466-475 (RGSEGYEVRP).

It belongs to the DHHC palmitoyltransferase family. PFA4 subfamily.

The protein resides in the endoplasmic reticulum membrane. The catalysed reaction is L-cysteinyl-[protein] + hexadecanoyl-CoA = S-hexadecanoyl-L-cysteinyl-[protein] + CoA. Mediates the reversible addition of palmitate to target proteins, thereby regulating their membrane association and biological function. The polypeptide is Palmitoyltransferase PFA4 (Mycosarcoma maydis (Corn smut fungus)).